The primary structure comprises 475 residues: MAAPRPPPARLSGVMVPAPIQDLEALRALTALFKEQRNRETAPRTIFQRVLDILKKSSHAVELACRDPSQVENLASSLQLITECFRCLRNACIECSVNQNSIRNLDTIGVAVDLILLFRELRVEQESLLTAFRCGLQFLGNIASRNEDSQSIVWVHAFPELFLSCLNHPDKKIVAYSSMILFTSLNHERMKELEENLNIAIDVIDAYQKHPESEWPFLIITDLFLKSPELVQAMFPKLNNQERVTLLDLMIAKITSDEPLTKDDIPVFLRHAELIASTFVDQCKTVLKLASEEPPDDEEALATIRLLDVLCEMTVNTELLGYLQVFPGLLERVIDLLRVIHVAGKETTNIFSNCGCVRAEGDISNVANGFKSHLIRLIGNLCYKNKDNQDKVNELDGIPLILDNCNISDSNPFLTQWVIYAIRNLTEDNSQNQDLIAKMEEQGLADASLLKKVGFEVEKKGEKLILKSTRDTPKP.

The residue at position 10 (Arg-10) is an Omega-N-methylarginine. Ser-12 is subject to Phosphoserine; by AURKB. Position 77 is a phosphoserine; by PLK1 (Ser-77). Position 82 is a phosphothreonine; by PLK1 (Thr-82). Phosphoserine is present on Ser-430.

The protein belongs to the ataxin-10 family. As to quaternary structure, homooligomer. Interacts with GNB2. Interacts with IQCB1. Interacts with OGT. Polyubiquitinated. Post-translationally, phosphorylation at Ser-12 by AURKB promotes the association of ATXN10 with PLK1. Phosphorylation at Ser-77 and Thr-82 by PLK1 may play a role in the regulation of cytokinesis and may stimulate the proteasome-mediated degradation of ATXN10. As to expression, expressed in the central nervous system.

It is found in the cytoplasm. The protein resides in the perinuclear region. Its subcellular location is the midbody. It localises to the cytoskeleton. The protein localises to the cilium basal body. It is found in the microtubule organizing center. The protein resides in the centrosome. Its subcellular location is the centriole. Its function is as follows. May play a role in the regulation of cytokinesis. May play a role in signaling by stimulating protein glycosylation. Induces neuritogenesis by activating the Ras-MAP kinase pathway and is necessary for the survival of cerebellar neurons. Does not appear to play a major role in ciliogenesis. The chain is Ataxin-10 (ATXN10) from Homo sapiens (Human).